Here is a 202-residue protein sequence, read N- to C-terminus: Protein GrpE (202 aa).

Basic and acidic residues predominate over residues 21–37 (EELKNEEVKEETHEHEH). Residues 21 to 52 (EELKNEEVKEETHEHEHKHGGHTCCGKHGHKH) are disordered. A compositionally biased stretch (basic residues) spans 38-51 (KHGGHTCCGKHGHK).

It belongs to the GrpE family. In terms of assembly, homodimer.

It localises to the cytoplasm. Participates actively in the response to hyperosmotic and heat shock by preventing the aggregation of stress-denatured proteins, in association with DnaK and GrpE. It is the nucleotide exchange factor for DnaK and may function as a thermosensor. Unfolded proteins bind initially to DnaJ; upon interaction with the DnaJ-bound protein, DnaK hydrolyzes its bound ATP, resulting in the formation of a stable complex. GrpE releases ADP from DnaK; ATP binding to DnaK triggers the release of the substrate protein, thus completing the reaction cycle. Several rounds of ATP-dependent interactions between DnaJ, DnaK and GrpE are required for fully efficient folding. In Fusobacterium nucleatum subsp. polymorphum (Fusobacterium polymorphum), this protein is Protein GrpE.